The following is a 631-amino-acid chain: Polyadenylate-binding protein, cytoplasmic and nuclear (631 aa).

Positions 1–56 are disordered; it reads MSDLQESLEKLSINEKAPQAPADDATPSNTTTLEKESSESAAAAAGEGAGEEGEEA. RRM domains follow at residues 58-136, 146-223, 239-316, and 342-419; these read ASLY…WSQR, GNIF…KHVS, TNVY…RAQK, and VNLF…LAQR. The tract at residues 518 to 545 is disordered; sequence GGEFNGPNGQRQQRGAYPPNRNQKGGRP. Positions 545 to 626 constitute a PABC domain; sequence PQRDLAAIIS…ALTAFEEYKK (82 aa).

Belongs to the polyadenylate-binding protein type-1 family.

The protein localises to the cytoplasm. The protein resides in the nucleus. Binds the poly(A) tail of mRNA. Appears to be an important mediator of the multiple roles of the poly(A) tail in mRNA biogenesis, stability and translation. In the nucleus, involved in both mRNA cleavage and polyadenylation. Is also required for efficient mRNA export to the cytoplasm. Acts in concert with a poly(A)-specific nuclease (PAN) to affect poly(A) tail shortening, which may occur concomitantly with either nucleocytoplasmic mRNA transport or translational initiation. In the cytoplasm, stimulates translation initiation and regulates mRNA decay through translation termination-coupled poly(A) shortening, probably mediated by PAN. The sequence is that of Polyadenylate-binding protein, cytoplasmic and nuclear (PAB1) from Meyerozyma guilliermondii (strain ATCC 6260 / CBS 566 / DSM 6381 / JCM 1539 / NBRC 10279 / NRRL Y-324) (Yeast).